Reading from the N-terminus, the 533-residue chain is Nuclear receptor corepressor 1 (533 aa).

Positions 1–17 (KDKGPPPKSRYEEELRT) are enriched in basic and acidic residues. The interval 1-21 (KDKGPPPKSRYEEELRTRGKT) is disordered. The CORNR box 1 signature appears at 29 to 33 (IDVII). Residues 37–144 (IASDKDARER…EGMGQVPRTH (108 aa)) form a disordered region. A compositionally biased stretch (basic and acidic residues) spans 38-47 (ASDKDARERG). A compositionally biased stretch (low complexity) spans 48 to 59 (SQSSDSSSSLSS). Ser73 and Ser77 each carry phosphoserine. Residues 130–209 (PSSQAEGMGQ…QSQTVLHPRP (80 aa)) form an ID1 region. A required for interaction with RARA in the absence of its ligand region spans residues 145–148 (RLIT). A CORNR box 2 motif is present at residues 153–157 (ICQII). The segment covering 165-180 (QVPSQPSTSTFQTSPS) has biased composition (low complexity). Residues 165 to 254 (QVPSQPSTST…SPPQGPAVHE (90 aa)) are disordered. Over residues 181 to 204 (ALSSTPVRTKPSSRYSPESQSQTV) the composition is skewed to polar residues. Residues Ser196, Ser214, Ser230, Ser245, and Ser278 each carry the phosphoserine modification. Residues 218-236 (LVDKSRGSRPGKSPERSHI) are compositionally biased toward basic and acidic residues. An ID2 region spans residues 306-367 (IFRKLNSSGG…EDIIRKALMG (62 aa)). The short motif at 357–361 (LEDII) is the CORNR box 3 element. Over residues 382-399 (HPVGVVPGSASTSVVTSS) the composition is skewed to low complexity. The interval 382-476 (HPVGVVPGSA…RPSSTGSTQF (95 aa)) is disordered. Thr492 bears the Phosphothreonine mark. Residues Ser529 and Ser531 each carry the phosphoserine modification.

Belongs to the N-CoR nuclear receptor corepressors family. Forms a large corepressor complex that contains SIN3A/B and histone deacetylases HDAC1 and HDAC2. This complex associates with the thyroid receptor (TR) and the retinoid acid receptor (RAR) in the absence of ligand. Interacts directly with RARA; the interaction is facilitated with RARA trimethylation. Component of the N-Cor repressor complex, at least composed of CBFA2T3, HEXIM1, NCOR1, NCOR2, HDAC3, TBL1X, TBL1XR1, CORO2A and GPS2. Interacts with ZBTB33; the interaction serves to recruit the N-CoR complex to promoter regions containing methylated CpG dinucleotides. Interacts with TRIM28 and KDM3A. Interacts (via the RD1 domain) with BAZ1A (via its N-terminal); the interaction corepresses a number of NCOR1-regulated genes. Interacts with BCL6, C1D, DACH1, HEXIM1, HDAC7, RORA, RORC, SAP30, SIAH2, SIN3A and SIN3B. May interact with DEAF1. Interacts with RXRA. Interacts with SETD5. Interacts with VDR. Interacts with ZBTB7A. Interacts with AR. Interacts with HDAC3. In terms of processing, ubiquitinated; mediated by SIAH2 and leading to its subsequent proteasomal degradation.

The protein resides in the nucleus. Mediates transcriptional repression by certain nuclear receptors. Part of a complex which promotes histone deacetylation and the formation of repressive chromatin structures which may impede the access of basal transcription factors. Participates in the transcriptional repressor activity produced by BCL6. Recruited by ZBTB7A to the androgen response elements/ARE on target genes, negatively regulates androgen receptor signaling and androgen-induced cell proliferation. Mediates the NR1D1-dependent repression and circadian regulation of TSHB expression. The NCOR1-HDAC3 complex regulates the circadian expression of the core clock gene ARTNL/BMAL1 and the genes involved in lipid metabolism in the liver. The polypeptide is Nuclear receptor corepressor 1 (Ncor1) (Rattus norvegicus (Rat)).